The sequence spans 463 residues: General transcription factor IIH subunit 4 (463 aa).

Belongs to the TFB2 family. Component of the 7-subunit TFIIH core complex composed of XPB/ERCC3, XPD/ERCC2, GTF2H1, GTF2H2, GTF2H3, GTF2H4 and GTF2H5, which is active in NER. The core complex associates with the 3-subunit CDK-activating kinase (CAK) module composed of CCNH/cyclin H, CDK7 and MNAT1 to form the 10-subunit holoenzyme (holo-TFIIH) active in transcription. Part of TBP-based Pol II pre-initiation complex (PIC), in which Pol II core assembles with general transcription factors and other specific initiation factors including GTF2E1, GTF2E2, GTF2F1, GTF2F2, TCEA1, ERCC2, ERCC3, GTF2H2, GTF2H3, GTF2H4, GTF2H5, GTF2A1, GTF2A2, GTF2B and TBP; this large multi-subunit PIC complex mediates DNA unwinding and targets Pol II core to the transcription start site where the first phosphodiester bond forms.

Its subcellular location is the nucleus. In terms of biological role, component of the general transcription and DNA repair factor IIH (TFIIH) core complex, which is involved in general and transcription-coupled nucleotide excision repair (NER) of damaged DNA and, when complexed to CAK, in RNA transcription by RNA polymerase II. In NER, TFIIH acts by opening DNA around the lesion to allow the excision of the damaged oligonucleotide and its replacement by a new DNA fragment. In transcription, TFIIH has an essential role in transcription initiation. When the pre-initiation complex (PIC) has been established, TFIIH is required for promoter opening and promoter escape. Phosphorylation of the C-terminal tail (CTD) of the largest subunit of RNA polymerase II by the kinase module CAK controls the initiation of transcription. This is General transcription factor IIH subunit 4 (Gtf2h4) from Mus musculus (Mouse).